Consider the following 60-residue polypeptide: Large ribosomal subunit protein bL32 (60 aa).

Belongs to the bacterial ribosomal protein bL32 family.

The chain is Large ribosomal subunit protein bL32 from Desulfovibrio desulfuricans (strain ATCC 27774 / DSM 6949 / MB).